A 376-amino-acid chain; its full sequence is N-acetyldiaminopimelate deacetylase (376 aa).

Residue Asp-69 is part of the active site. Catalysis depends on Glu-128, which acts as the Proton acceptor.

This sequence belongs to the peptidase M20A family. N-acetyldiaminopimelate deacetylase subfamily.

The enzyme catalyses N-acetyl-(2S,6S)-2,6-diaminopimelate + H2O = (2S,6S)-2,6-diaminopimelate + acetate. Its pathway is amino-acid biosynthesis; L-lysine biosynthesis via DAP pathway; LL-2,6-diaminopimelate from (S)-tetrahydrodipicolinate (acetylase route): step 3/3. Functionally, catalyzes the conversion of N-acetyl-diaminopimelate to diaminopimelate and acetate. This chain is N-acetyldiaminopimelate deacetylase, found in Bacillus thuringiensis subsp. konkukian (strain 97-27).